We begin with the raw amino-acid sequence, 606 residues long: NADH-ubiquinone oxidoreductase chain 5 (606 aa).

Met1 carries the N-formylmethionine modification. The next 15 helical transmembrane spans lie at 4–24 (FSSL…MMSF), 43–63 (AFIT…ELII), 87–107 (MMFI…SMWY), 117–137 (FFKY…ANNL), 140–160 (LFIG…WWYG), 171–191 (AILY…WFLT), 213–233 (LIGL…HPWL), 241–261 (TPVS…FLLI), 273–293 (IQSI…MCAL), 310–330 (LGLM…LHIC), 366–386 (MPFT…MPFL), 413–433 (LIAT…ALLG), 457–477 (LLIG…PTTI), 482–502 (MPYY…ILAL), and 582–602 (GLIK…MILF).

In terms of assembly, core subunit of respiratory chain NADH dehydrogenase (Complex I) which is composed of 45 different subunits.

It is found in the mitochondrion inner membrane. It catalyses the reaction a ubiquinone + NADH + 5 H(+)(in) = a ubiquinol + NAD(+) + 4 H(+)(out). Its function is as follows. Core subunit of the mitochondrial membrane respiratory chain NADH dehydrogenase (Complex I) which catalyzes electron transfer from NADH through the respiratory chain, using ubiquinone as an electron acceptor. Essential for the catalytic activity and assembly of complex I. This is NADH-ubiquinone oxidoreductase chain 5 (MT-ND5) from Bos taurus (Bovine).